The following is a 155-amino-acid chain: Ribosome maturation factor RimP (155 aa).

Belongs to the RimP family.

It is found in the cytoplasm. Its function is as follows. Required for maturation of 30S ribosomal subunits. In Prochlorococcus marinus (strain SARG / CCMP1375 / SS120), this protein is Ribosome maturation factor RimP.